Reading from the N-terminus, the 388-residue chain is Probable proton-coupled zinc antiporter SLC30A3 (388 aa).

Residues 1-46 (MEPSPAAGGLETTRLVSPRDRGGAGGSLRLKSLFTEPSEPLPEESK) form a disordered region. Residues 1–75 (MEPSPAAGGL…TPERLHARRQ (75 aa)) are Cytoplasmic-facing. A helical membrane pass occupies residues 76 to 96 (LYAACAVCFVFMAGEVVGGYL). The Lumenal segment spans residues 97 to 105 (AHSLAIMTD). Residues 106–126 (AAHLLADVGSMMGSLFSLWLS) traverse the membrane as a helical segment. 2 residues coordinate Zn(2+): His-108 and Asp-112. Over 127–145 (TRPATRTMTFGWHRSETLG) the chain is Cytoplasmic. The chain crosses the membrane as a helical span at residues 146-166 (ALASVVSLWMVTGILLYLAFV). The Lumenal segment spans residues 167–177 (RLLHSDYHIEG). Residues 178-198 (GAMLLTASIAVCANLLMAFVL) form a helical membrane-spanning segment. The Cytoplasmic segment spans residues 199-235 (HQAGPPHSHGSRGAEYAPLEEGPEEPLPLGNTSVRAA). Residues 236–256 (FVHVLGDLLQSFGVLAASILI) traverse the membrane as a helical segment. His-238 and Asp-242 together coordinate Zn(2+). Residues 257-264 (YFKPQYKA) lie on the Lumenal side of the membrane. Residues 265–285 (ADPISTFLFSICALGSTAPTL) traverse the membrane as a helical segment. The Cytoplasmic portion of the chain corresponds to 286–388 (RDVLRILMEG…CLRCQEPPQA (103 aa)). Tyr-357 participates in a covalent cross-link: Dityrosine (Tyr-Tyr) (interchain with Y-372). Tyr-372 is covalently cross-linked (Dityrosine (Tyr-Tyr) (interchain with Y-357)).

This sequence belongs to the cation diffusion facilitator (CDF) transporter (TC 2.A.4) family. SLC30A subfamily. In terms of assembly, homodimer; dityrosine-linked. Homodimerization seems specific of the human protein and enhances the zinc transport efficiency. Interacts with TMEM163. Post-translationally, homodimerization through dityrosine bonds is stimulated by oxidative stress.

It localises to the cytoplasmic vesicle. It is found in the secretory vesicle. The protein resides in the synaptic vesicle membrane. Its subcellular location is the synapse. The protein localises to the synaptosome. It localises to the late endosome membrane. It is found in the lysosome membrane. The enzyme catalyses Zn(2+)(in) + 2 H(+)(out) = Zn(2+)(out) + 2 H(+)(in). Functionally, probable proton-coupled zinc ion antiporter mediating the import of zinc from cytoplasm into synaptic vesicles and participating to cellular zinc ion homeostasis in the brain. The polypeptide is Probable proton-coupled zinc antiporter SLC30A3 (Homo sapiens (Human)).